A 138-amino-acid chain; its full sequence is Probable phospholipase A2 homolog 1 (138 aa).

The N-terminal stretch at 1–21 is a signal peptide; sequence MPPRSPLLALVFLAAGVLSSA. 6 cysteine pairs are disulfide-bonded: cysteine 29/cysteine 56, cysteine 33/cysteine 62, cysteine 38/cysteine 109, cysteine 49/cysteine 69, cysteine 68/cysteine 93, and cysteine 75/cysteine 86. Ca(2+) contacts are provided by tyrosine 48, glycine 50, and tryptophan 53. Histidine 72 is an active-site residue. Aspartate 73 contributes to the Ca(2+) binding site.

Belongs to the phospholipase A2 family. It depends on Ca(2+) as a cofactor.

The protein localises to the secreted. The catalysed reaction is a 1,2-diacyl-sn-glycero-3-phosphocholine + H2O = a 1-acyl-sn-glycero-3-phosphocholine + a fatty acid + H(+). In terms of biological role, PA2 catalyzes the calcium-dependent hydrolysis of the 2-acyl groups in 3-sn-phosphoglycerides. Releases lysophospholipids (LPLs) and free fatty acids (FFAs) from membrane phospholipids in response to hormones and other external stimuli. The protein is Probable phospholipase A2 homolog 1 (PLA2-I) of Oryza sativa subsp. japonica (Rice).